The following is a 277-amino-acid chain: Putative phosphoenolpyruvate synthase regulatory protein (277 aa).

Residue G157–T164 participates in ADP binding.

It belongs to the pyruvate, phosphate/water dikinase regulatory protein family. PSRP subfamily.

It catalyses the reaction [pyruvate, water dikinase] + ADP = [pyruvate, water dikinase]-phosphate + AMP + H(+). It carries out the reaction [pyruvate, water dikinase]-phosphate + phosphate + H(+) = [pyruvate, water dikinase] + diphosphate. Functionally, bifunctional serine/threonine kinase and phosphorylase involved in the regulation of the phosphoenolpyruvate synthase (PEPS) by catalyzing its phosphorylation/dephosphorylation. This is Putative phosphoenolpyruvate synthase regulatory protein from Klebsiella pneumoniae subsp. pneumoniae (strain ATCC 700721 / MGH 78578).